The following is a 496-amino-acid chain: MDDKQHTSSSDDERAEIATSNQDQETNSSKRVHLKRWQFISILIGTILITAVITVVAYIFINQKISGLNKTDQSNLNKIENVYKILNSDYYKKQDSDKLSKAAIDGMVKELKDPYSEYLTKEQTKSFNEGVSGDFVGIGAEMQKKNDQIMVTSPMKGSPAERAGIRPKDVITKVNGKSIKGKALDEVVKDVRGKENTEVTLTVQRGSEEKDVKIKREKIHVKSVEYKKKGKVGVITINKFQNDTSGELKDAVLKAHKDGLKKIVLDLRNNPGGLLDEAVKMANIFIDKGKTVVKLEKGKDTEAIQTSNDALKEAKDMDISILVNEGSASASEVFTGALKDYNKAKVYGSKTFGKGVVQTTREFKDGSLLKYTEMKWLTPDGHYIHGKGIKPDVTIDTPKYQSLNVIPNTKTFKVGDDDKNIKTIKIGLSALGYKVDNESTQFDKALENQVKAFQQANKLEVTGEFNKETNNKFTELLVEKANKHDDVLDKLINILK.

Over residues 1–16 (MDDKQHTSSSDDERAE) the composition is skewed to basic and acidic residues. Positions 1-27 (MDDKQHTSSSDDERAEIATSNQDQETN) are disordered. Positions 18-27 (ATSNQDQETN) are enriched in polar residues. The chain crosses the membrane as a helical span at residues 39-59 (FISILIGTILITAVITVVAYI). The PDZ domain occupies 124-206 (TKSFNEGVSG…TEVTLTVQRG (83 aa)). Catalysis depends on charge relay system residues serine 329, aspartate 340, and lysine 354.

It belongs to the peptidase S41A family.

The protein resides in the cell membrane. The protein is Probable CtpA-like serine protease of Staphylococcus aureus (strain COL).